We begin with the raw amino-acid sequence, 156 residues long: MSRRHKAEKREINPDPKFGDLVITKFMNAIMFDGKKSVAERIVYGALDVVESKVKSDPVALFHRALENVAPHIEVRSRRVGGATYQVPIDVRPDRRQALAIRWLISAARGRNEATMIDRLSGELMDAANNRGSAVKKREDVHRMAEANRAFSHYRW.

It belongs to the universal ribosomal protein uS7 family. As to quaternary structure, part of the 30S ribosomal subunit. Contacts proteins S9 and S11.

Its function is as follows. One of the primary rRNA binding proteins, it binds directly to 16S rRNA where it nucleates assembly of the head domain of the 30S subunit. Is located at the subunit interface close to the decoding center, probably blocks exit of the E-site tRNA. The protein is Small ribosomal subunit protein uS7 of Bartonella henselae (strain ATCC 49882 / DSM 28221 / CCUG 30454 / Houston 1) (Rochalimaea henselae).